We begin with the raw amino-acid sequence, 819 residues long: Mitosis inhibitor protein kinase SWE1 (819 aa).

A Phosphoserine; by CDC5 modification is found at Ser36. Thr45 is modified (phosphothreonine; by CDC28). 2 positions are modified to phosphoserine; by CDC28: Ser56 and Ser63. Position 70 is a phosphoserine (Ser70). Thr74 bears the Phosphothreonine; by CDC28 mark. Residues 86–105 form a disordered region; it reads KIEEEEEEEEEGKDEESVDS. Residues 88–102 are compositionally biased toward acidic residues; that stretch reads EEEEEEEEEGKDEES. A Phosphoserine; by CDC5 modification is found at Ser102. A Phosphoserine; by CDC28 modification is found at Ser105. Residue Ser111 is modified to Phosphoserine; by CDC5, CDC28 and CLA4. Residues 117 to 168 are disordered; that stretch reads ESVTTPITKRSAEKTNSPISLKQWNQRWFPKNDARTENTSSSSSYSVAKPNQ. A Phosphoserine; by CDC5 modification is found at Ser118. Residues 118–142 show a composition bias toward polar residues; the sequence is SVTTPITKRSAEKTNSPISLKQWNQ. 2 positions are modified to phosphothreonine; by CDC28: Thr121 and Thr124. Ser127 carries the phosphoserine; by CDC28 modification. At Thr131 the chain carries Phosphothreonine; by CDC5. The residue at position 133 (Ser133) is a Phosphoserine; by CDC28. Ser136 carries the phosphoserine; by CDC28 and CLA4 modification. Ser156 and Ser169 each carry phosphoserine; by CDC5. Thr196 carries the post-translational modification Phosphothreonine; by CDC28. At Ser201 the chain carries Phosphoserine; by CDC28. A phosphoserine; by CDC5 mark is found at Ser225 and Ser254. The residue at position 262 (Ser262) is a Phosphoserine. 2 positions are modified to phosphoserine; by CDC28: Ser263 and Ser266. A disordered region spans residues 278–297; that stretch reads NQTNILSPTNSLVTNSSPQT. The residue at position 280 (Thr280) is a Phosphothreonine; by CDC5. Ser284 and Ser294 each carry phosphoserine. The residue at position 312 (Ser312) is a Phosphoserine; by CLA4. Residues 341 to 395 are disordered; sequence PIIISSHHSTRKNPQPYQFRGRYDNDTDEEISTPTRRKSIIGATSQTHRESRPLS. The residue at position 345 (Ser345) is a Phosphoserine. Phosphothreonine; by CDC28 occurs at positions 367 and 373. Ser379 carries the post-translational modification Phosphoserine; by CDC5 and CLA4. A Phosphothreonine; by CDC28 modification is found at Thr384. 2 positions are modified to phosphoserine; by CDC5 and CLA4: Ser395 and Ser438. Residues 444–794 enclose the Protein kinase domain; sequence FTNVHSIGKG…NQILQTEECL (351 aa). Residues 450–458 and Lys473 each bind ATP; that span reads IGKGQFSTV. Asp579 serves as the catalytic Proton acceptor. Mg(2+) contacts are provided by Asn584 and Asp597. Ser610 is subject to Phosphoserine; by CDC5. Thr629 carries the phosphothreonine; by CDC5 modification. A Phosphothreonine; by CDC5 and CLA4 modification is found at Thr688. A Phosphothreonine modification is found at Thr692. The segment covering 707 to 716 has biased composition (polar residues); the sequence is SNNAGTSTVH. A disordered region spans residues 707 to 736; the sequence is SNNAGTSTVHNNSNINNPNMNNGNDNNNVN. Over residues 717–736 the composition is skewed to low complexity; the sequence is NNSNINNPNMNNGNDNNNVN. Lys741 participates in a covalent cross-link: Glycyl lysine isopeptide (Lys-Gly) (interchain with G-Cter in ubiquitin).

The protein belongs to the protein kinase superfamily. Ser/Thr protein kinase family. WEE1 subfamily. Interacts with CLB2-CDC28. Partial hyperphosphorylation of SWE1 by CLB2-CDC28 stabilizes the ternary complex of SWE1 and CLB2-CDC28 and stimulates kinase activity of SWE1 in a positive feedback loop, maintaining CLB2-CDC28 in the tyrosine-phosphorylated state. Fully hyperphosphorylated SWE1 dissociates from CLB2-CDC28. Interacts with HSL7, KCC4 and MET30. In terms of processing, ubiquitinated by the SCF(MET30) complex, leading to its degradation by the proteasome. Post-translationally, phosphorylated progressively by CLA4, CLB2-CDC28 and CDC5. CLA4-dependent phosphorylation occurs in late S phase, followed by phosphorylation by CLB2-CDC28 in early G2, when the levels of mitotic CLB2 increases. This phosphorylation is critical for triggering subsequent SWE1-CDC5 interaction and CDC5-dependent phosphorylation. The resulting cumulative hyperphosphorylation down-regulates SWE1 by targeting it for ubiquitin-mediated degradation. This stepwise phosphorylation is thought to be a mechanism to integrate the different checkpoint requirements before entry into mitosis.

Its subcellular location is the bud neck. The protein localises to the nucleus. It catalyses the reaction L-seryl-[protein] + ATP = O-phospho-L-seryl-[protein] + ADP + H(+). The enzyme catalyses L-threonyl-[protein] + ATP = O-phospho-L-threonyl-[protein] + ADP + H(+). Functionally, protein kinase that acts as a negative regulator of entry into mitosis (G2 to M transition) by phosphorylating and inhibiting the mitosis-promoting cyclin B-bound CDC28 at 'Tyr-19'. SWE1-mediated inhibition of CDC28 acts in a cell size or morphogenesis checkpoint to delay mitosis in response to defects in growth, actin organization or bud formation. Inhibits the activity of B-type cyclins in replication initiation strongly for CLB2, moderately for CLB3 and CLB4, and there is no apparent inhibition for CLB5 and CLB6, correlating with the normal expression timing of those cyclins. Hyperphosphorylation and degradation of SWE1 when all checkpoint requirement are met releases CLB2-CDC28 from inhibition and allows for progression through the cell cycle. SWE1-dependent CDC28 phosphorylation is also required for pachytene arrest upon activation of the recombination checkpoint during meiosis. Also involved in the regulation of nitrogen starvation- and short chain alcohol-induced filamentous growth, or filamentous differentiation in response to slowed DNA synthesis. Can act both on serines and on tyrosines. This chain is Mitosis inhibitor protein kinase SWE1 (SWE1), found in Saccharomyces cerevisiae (strain ATCC 204508 / S288c) (Baker's yeast).